The chain runs to 591 residues: Aspartate--tRNA ligase (591 aa).

Glutamate 173 is a binding site for L-aspartate. An aspartate region spans residues 197–200; that stretch reads QLFK. Arginine 219 provides a ligand contact to L-aspartate. Residues 219–221 and glutamine 228 each bind ATP; that span reads RDE. Histidine 448 serves as a coordination point for L-aspartate. Residue glutamate 482 participates in ATP binding. Arginine 489 serves as a coordination point for L-aspartate. 534–537 provides a ligand contact to ATP; the sequence is GLDR.

The protein belongs to the class-II aminoacyl-tRNA synthetase family. Type 1 subfamily. In terms of assembly, homodimer.

The protein localises to the cytoplasm. It catalyses the reaction tRNA(Asp) + L-aspartate + ATP = L-aspartyl-tRNA(Asp) + AMP + diphosphate. Functionally, catalyzes the attachment of L-aspartate to tRNA(Asp) in a two-step reaction: L-aspartate is first activated by ATP to form Asp-AMP and then transferred to the acceptor end of tRNA(Asp). This is Aspartate--tRNA ligase from Shewanella amazonensis (strain ATCC BAA-1098 / SB2B).